A 107-amino-acid polypeptide reads, in one-letter code: Small polypeptide DEVIL 9 (107 aa).

Over residues 1-12 the composition is skewed to basic and acidic residues; sequence MDEKWRLSKKDA. The segment at 1 to 79 is disordered; the sequence is MDEKWRLSKK…EKGSITQKYS (79 aa). A helical membrane pass occupies residues 9-29; the sequence is KKDALAASCSSSSTSSKSKFS. The segment covering 13 to 65 has biased composition (low complexity); sequence LAASCSSSSTSSKSKFSRSFSTSASSSKAPAFVRSSSTKCSVPSSSSSSISRS. Residues 73 to 104 form a required for DVL/RTFL small polypeptide activity region; the sequence is SITQKYSSLAKEQKGRFYIMRRCVAMLVCWHK.

It belongs to the DVL/RTFL small polypeptides family.

It is found in the cell membrane. Functionally, small polypeptide acting as a regulatory molecule which coordinates cellular responses required for differentiation, growth and development, probably by restricting polar cell proliferation in lateral organs and coordinating socket cell recruitment and differentiation at trichome sites. In Arabidopsis thaliana (Mouse-ear cress), this protein is Small polypeptide DEVIL 9.